A 171-amino-acid polypeptide reads, in one-letter code: Large ribosomal subunit protein uL10 (171 aa).

The protein belongs to the universal ribosomal protein uL10 family. In terms of assembly, part of the ribosomal stalk of the 50S ribosomal subunit. The N-terminus interacts with L11 and the large rRNA to form the base of the stalk. The C-terminus forms an elongated spine to which L12 dimers bind in a sequential fashion forming a multimeric L10(L12)X complex.

Forms part of the ribosomal stalk, playing a central role in the interaction of the ribosome with GTP-bound translation factors. This is Large ribosomal subunit protein uL10 from Erythrobacter litoralis (strain HTCC2594).